The chain runs to 978 residues: MAAAPPLAAGLRPAMAAAQAPVVAAAWGVGARRGAALSSSARCRALRLSRGGGGGRDGWVPPPVVGRMPPRTLSVRCAASNGRITQQEFTEMAWQSIVSSPEVAKESKHQIVETEHLMKSLLEQRNGLARRIFSKAGVDNTRLLDATEKFIQRQPKVLGEDPGSMLGRDLEALIQRARDFKKEYGDSFVSVEHLVLGFAEDKRFGRQLFKDFQITVQSLKTAIESIRGKQNVIDQDPEGKYEALDKYGKDLTAMARQGKLDPVIGRDDEIRRCIQILSRRTKNNPVLIGEPGVGKTAIAEGLAQRIVQGDVPQALTNRRLIALDMGALIAGAKYRGEFEDRLKAVLKEVTDSDGQTILFIDEIHTVVGAGATNGAMDAGNLLKPMLGRGELRCIGATTLDEYRKYIEKDPALERRFQQVYVDQPSVEDTISILRGLRERYELHHGVRISDSALVAAALLSDRYISGRFLPDKAIDLVDESAAKLKMEITSKPTALDEIDRAVIKLEMERLSLTNDTDKASRDRLSRIEAELSLLKEKQKDLTEQWEREKSVMTKIQSIKEEIDRVNVEIQQAEREYDLNRAAELKYGSLNALQRQLQTTEKELDEYQSSGKSMLREEVTQDDIAEIVSRWTGIPVSKLKQSDREKLLYLEEELHKRVVGQDPAVKAVSEAIQRSRAGLSDPNRPIASFMFMGPTGVGKTELAKALAAFMFNTEEAVVRIDMSEYMEKHSVSRLIGAPPGYVGYEEGGQLTEAVRRRPYSIILFDEIEKAHGDVFNVFLQILDDGRVTDSQGRKVSFTNSIIIMTSNVGSQFILNMDEEGGSTDSAYENIKKRVMDAARSVFRPEFMNRIDEYIVFKPLEREQINSIVKLQLARVQKRIADRKIKLEVSPGAVEFLGSLGYDPNYGARPVKRVIQQYVENELAKGILRGDFKDEDSILVDTQVTVPSNGQLPQQKLVFHKMSEESAPAAAEDEKFLPAV.

The N-terminal 76 residues, 1–76 (MAAAPPLAAG…RMPPRTLSVR (76 aa)), are a transit peptide targeting the chloroplast. Residues 85–229 (TQQEFTEMAW…KTAIESIRGK (145 aa)) form the Clp R domain. Repeat regions lie at residues 89–154 (FTEM…IQRQ) and 166–229 (LGRD…IRGK). The segment at 244 to 492 (LDKYGKDLTA…KLKMEITSKP (249 aa)) is i. Residues 289–296 (GEPGVGKT) and 692–699 (GPTGVGKT) each bind ATP. Positions 618–809 (VTQDDIAEIV…IIIMTSNVGS (192 aa)) are II.

The protein belongs to the ClpA/ClpB family.

The protein resides in the plastid. It localises to the chloroplast. Functionally, molecular chaperone that may play a role in chloroplast development. The protein is Chaperone protein ClpB2, chloroplastic (CLPB2) of Oryza sativa subsp. japonica (Rice).